We begin with the raw amino-acid sequence, 436 residues long: UDP-N-acetylmuramate--L-alanine ligase (436 aa).

108–114 (GAHGKTS) is an ATP binding site.

This sequence belongs to the MurCDEF family.

It localises to the cytoplasm. It carries out the reaction UDP-N-acetyl-alpha-D-muramate + L-alanine + ATP = UDP-N-acetyl-alpha-D-muramoyl-L-alanine + ADP + phosphate + H(+). It functions in the pathway cell wall biogenesis; peptidoglycan biosynthesis. Cell wall formation. The sequence is that of UDP-N-acetylmuramate--L-alanine ligase from Bacillus cereus (strain AH187).